A 184-amino-acid polypeptide reads, in one-letter code: Probable cobalt-precorrin-6B C(15)-methyltransferase (decarboxylating) (184 aa).

S-adenosyl-L-methionine-binding positions include Thr12, 36-40 (GCGTG), Asp59, and Ala87.

It belongs to the methyltransferase superfamily. Archaeal-type CbiT family.

It catalyses the reaction Co-precorrin-6B + S-adenosyl-L-methionine = Co-precorrin-7 + S-adenosyl-L-homocysteine + CO2. It functions in the pathway cofactor biosynthesis; adenosylcobalamin biosynthesis; cob(II)yrinate a,c-diamide from sirohydrochlorin (anaerobic route): step 8/10. In terms of biological role, catalyzes the methylation of C-15 in cobalt-precorrin-6B followed by the decarboxylation of C-12 to form cobalt-precorrin-7. This chain is Probable cobalt-precorrin-6B C(15)-methyltransferase (decarboxylating), found in Methanosarcina mazei (strain ATCC BAA-159 / DSM 3647 / Goe1 / Go1 / JCM 11833 / OCM 88) (Methanosarcina frisia).